Consider the following 499-residue polypeptide: Eukaryotic peptide chain release factor GTP-binding subunit ERF3A (499 aa).

The interval 1-69 (MELSEPIVEN…PKSVVAPPGA (69 aa)) is disordered. Residues 41–50 (RPPEESAHEM) are compositionally biased toward basic and acidic residues. Residues 72–298 (KEHVNVVFIG…DNLPNFNRSV (227 aa)) enclose the tr-type G domain. The G1 stretch occupies residues 81–88 (GHVDAGKS). 84-89 (DAGKST) is a GTP binding site. The segment at 137 to 141 (GKTVE) is G2. The G3 stretch occupies residues 158–161 (DAPG). Residues 220–223 (NKMD) and 262–264 (SGL) contribute to the GTP site. Residues 220 to 223 (NKMD) are G4. Residues 262 to 264 (SGL) form a G5 region.

Belongs to the TRAFAC class translation factor GTPase superfamily. Classic translation factor GTPase family. ERF3 subfamily. As to quaternary structure, component of the eRF1-eRF3-GTP ternary complex, composed of ETF1/ERF1 and ERF3 (GSPT1/ERF3A or GSPT2/ERF3B) and GTP. Component of the transient SURF (SMG1-UPF1-eRF1-eRF3) complex. The ETF1-GSPT1 complex interacts with JMJD4. Interacts with PABPC1. Interacts with SHFL.

It carries out the reaction GTP + H2O = GDP + phosphate + H(+). Functionally, GTPase component of the eRF1-eRF3-GTP ternary complex, a ternary complex that mediates translation termination in response to the termination codons UAA, UAG and UGA. GSPT1/ERF3A mediates ETF1/ERF1 delivery to stop codons: The eRF1-eRF3-GTP complex binds to a stop codon in the ribosomal A-site. GTP hydrolysis by GSPT1/ERF3A induces a conformational change that leads to its dissociation, permitting ETF1/ERF1 to accommodate fully in the A-site. Component of the transient SURF complex which recruits UPF1 to stalled ribosomes in the context of nonsense-mediated decay (NMD) of mRNAs containing premature stop codons. Required for SHFL-mediated translation termination which inhibits programmed ribosomal frameshifting (-1PRF) of mRNA from viruses and cellular genes. This Homo sapiens (Human) protein is Eukaryotic peptide chain release factor GTP-binding subunit ERF3A (GSPT1).